Reading from the N-terminus, the 67-residue chain is Large ribosomal subunit protein uL30 (67 aa).

This sequence belongs to the universal ribosomal protein uL30 family. As to quaternary structure, part of the 50S ribosomal subunit.

This Thermotoga neapolitana (strain ATCC 49049 / DSM 4359 / NBRC 107923 / NS-E) protein is Large ribosomal subunit protein uL30.